Reading from the N-terminus, the 326-residue chain is Transcription factor bHLH143 (326 aa).

The segment covering 175–189 (SDDDDNDDWESDDEV) has biased composition (acidic residues). Disordered regions lie at residues 175 to 194 (SDDD…STGH) and 234 to 275 (RDSS…EQSR). The span at 255–271 (PESNISSKQETGSGLSD) shows a compositional bias: polar residues. The bHLH domain occupies 263–312 (QETGSGLSDEQSRKDKIHTALRILESVVPGAKGKEALLLLDEAIDYLKLL).

As to quaternary structure, homodimer.

The protein localises to the nucleus. The chain is Transcription factor bHLH143 (BHLH143) from Arabidopsis thaliana (Mouse-ear cress).